A 329-amino-acid chain; its full sequence is Acetyl-coenzyme A carboxylase carboxyl transferase subunit alpha (329 aa).

The CoA carboxyltransferase C-terminal domain occupies 40–294 (QLETLAARRR…KNALEKHLSE (255 aa)).

It belongs to the AccA family. Acetyl-CoA carboxylase is a heterohexamer composed of biotin carboxyl carrier protein (AccB), biotin carboxylase (AccC) and two subunits each of ACCase subunit alpha (AccA) and ACCase subunit beta (AccD).

The protein localises to the cytoplasm. The catalysed reaction is N(6)-carboxybiotinyl-L-lysyl-[protein] + acetyl-CoA = N(6)-biotinyl-L-lysyl-[protein] + malonyl-CoA. The protein operates within lipid metabolism; malonyl-CoA biosynthesis; malonyl-CoA from acetyl-CoA: step 1/1. Its function is as follows. Component of the acetyl coenzyme A carboxylase (ACC) complex. First, biotin carboxylase catalyzes the carboxylation of biotin on its carrier protein (BCCP) and then the CO(2) group is transferred by the carboxyltransferase to acetyl-CoA to form malonyl-CoA. The chain is Acetyl-coenzyme A carboxylase carboxyl transferase subunit alpha from Prochlorococcus marinus (strain NATL1A).